The following is a 255-amino-acid chain: Small ribosomal subunit protein uS2 (255 aa).

Positions 231 to 255 (RLQTGAEEEFSTEGEEVVEETPAEA) are disordered. Over residues 236–255 (AEEEFSTEGEEVVEETPAEA) the composition is skewed to acidic residues.

This sequence belongs to the universal ribosomal protein uS2 family.

The protein is Small ribosomal subunit protein uS2 of Geobacter sp. (strain M21).